A 178-amino-acid chain; its full sequence is Cytochrome b6-f complex iron-sulfur subunit (178 aa).

A helical membrane pass occupies residues 20-42; the sequence is LLTFGSVTGVALGALYPVVNYFI. The 97-residue stretch at 65-161 folds into the Rieske domain; the sequence is ATGWLSSHPE…VSVENDNVFV (97 aa). [2Fe-2S] cluster-binding residues include cysteine 107, histidine 109, cysteine 125, and histidine 128. Residues cysteine 112 and cysteine 127 are joined by a disulfide bond.

Belongs to the Rieske iron-sulfur protein family. In terms of assembly, the 4 large subunits of the cytochrome b6-f complex are cytochrome b6, subunit IV (17 kDa polypeptide, PetD), cytochrome f and the Rieske protein, while the 4 small subunits are PetG, PetL, PetM and PetN. The complex functions as a dimer. It depends on [2Fe-2S] cluster as a cofactor.

The protein resides in the cellular thylakoid membrane. It catalyses the reaction 2 oxidized [plastocyanin] + a plastoquinol + 2 H(+)(in) = 2 reduced [plastocyanin] + a plastoquinone + 4 H(+)(out). Functionally, component of the cytochrome b6-f complex, which mediates electron transfer between photosystem II (PSII) and photosystem I (PSI), cyclic electron flow around PSI, and state transitions. The sequence is that of Cytochrome b6-f complex iron-sulfur subunit from Parasynechococcus marenigrum (strain WH8102).